A 289-amino-acid chain; its full sequence is ATP synthase subunit a (289 aa).

A run of 6 helical transmembrane segments spans residues 43-63, 104-124, 160-180, 193-213, 232-252, and 259-279; these read AFHVDTLGWSVLLGVVFLFIF, IAPLALTVFVWIFLLNLIDLV, ISVFALIVFYSIKVKGIGGFL, IVVQILLIPVNFLLEFVTLIA, IFILIAVMFGSGMFLLSALGV, and AVFHILIITLQAFIFMMLTIV.

It belongs to the ATPase A chain family. In terms of assembly, F-type ATPases have 2 components, CF(1) - the catalytic core - and CF(0) - the membrane proton channel. CF(1) has five subunits: alpha(3), beta(3), gamma(1), delta(1), epsilon(1). CF(0) has three main subunits: a(1), b(2) and c(9-12). The alpha and beta chains form an alternating ring which encloses part of the gamma chain. CF(1) is attached to CF(0) by a central stalk formed by the gamma and epsilon chains, while a peripheral stalk is formed by the delta and b chains.

The protein resides in the cell inner membrane. Key component of the proton channel; it plays a direct role in the translocation of protons across the membrane. The protein is ATP synthase subunit a of Pseudomonas paraeruginosa (strain DSM 24068 / PA7) (Pseudomonas aeruginosa (strain PA7)).